The primary structure comprises 113 residues: MAAVLEENGCSRQSSPSAGDSDAEPGDTARHKLESLLNRNMRIEMTDGRSLIGCFLCTDRDCNVILGSAQEFLRPSDSFPVREPRVLGLAMVPGHHIVSIQVELESVTSPQYI.

The tract at residues 1–29 is disordered; it reads MAAVLEENGCSRQSSPSAGDSDAEPGDTA. In terms of domain architecture, Sm spans 28–106; sequence TARHKLESLL…IVSIQVELES (79 aa).

It belongs to the snRNP Sm proteins family. In terms of assembly, component of the N-terminal acetyltransferase C (NatC) complex, which is composed of naa35, naa38 and naa30.

It is found in the cytoplasm. Functionally, auxillary component of the N-terminal acetyltransferase C (NatC) complex which catalyzes acetylation of N-terminal methionine residues. This chain is N-alpha-acetyltransferase 38-A, NatC auxiliary subunit (naa38-a), found in Xenopus laevis (African clawed frog).